A 104-amino-acid polypeptide reads, in one-letter code: Putative ankyrin repeat protein L677 (104 aa).

ANK repeat units lie at residues 16-43 (FNKS…NPNL), 44-73 (DISH…SNSV), and 75-102 (LEAY…NKSI).

The chain is Putative ankyrin repeat protein L677 from Acanthamoeba polyphaga (Amoeba).